A 161-amino-acid polypeptide reads, in one-letter code: Phosphopantetheine adenylyltransferase (161 aa).

Thr-9 is a substrate binding site. ATP contacts are provided by residues 9–10 (TF) and His-17. Substrate contacts are provided by Lys-41, Leu-73, and Arg-87. ATP contacts are provided by residues 88–90 (GLR), Glu-98, and 123–129 (YQFISGT).

The protein belongs to the bacterial CoaD family. Homohexamer. It depends on Mg(2+) as a cofactor.

It is found in the cytoplasm. The catalysed reaction is (R)-4'-phosphopantetheine + ATP + H(+) = 3'-dephospho-CoA + diphosphate. The protein operates within cofactor biosynthesis; coenzyme A biosynthesis; CoA from (R)-pantothenate: step 4/5. In terms of biological role, reversibly transfers an adenylyl group from ATP to 4'-phosphopantetheine, yielding dephospho-CoA (dPCoA) and pyrophosphate. The polypeptide is Phosphopantetheine adenylyltransferase (Cupriavidus necator (strain ATCC 17699 / DSM 428 / KCTC 22496 / NCIMB 10442 / H16 / Stanier 337) (Ralstonia eutropha)).